Reading from the N-terminus, the 362-residue chain is Phosphoserine aminotransferase (362 aa).

L-glutamate-binding residues include Ser-9 and Arg-42. Pyridoxal 5'-phosphate contacts are provided by residues 76 to 77 (GR), Trp-102, Thr-153, Asp-174, and Gln-197. N6-(pyridoxal phosphate)lysine is present on Lys-198. 239 to 240 (NT) provides a ligand contact to pyridoxal 5'-phosphate.

It belongs to the class-V pyridoxal-phosphate-dependent aminotransferase family. SerC subfamily. As to quaternary structure, homodimer. It depends on pyridoxal 5'-phosphate as a cofactor.

The protein localises to the cytoplasm. It carries out the reaction O-phospho-L-serine + 2-oxoglutarate = 3-phosphooxypyruvate + L-glutamate. It catalyses the reaction 4-(phosphooxy)-L-threonine + 2-oxoglutarate = (R)-3-hydroxy-2-oxo-4-phosphooxybutanoate + L-glutamate. It functions in the pathway amino-acid biosynthesis; L-serine biosynthesis; L-serine from 3-phospho-D-glycerate: step 2/3. It participates in cofactor biosynthesis; pyridoxine 5'-phosphate biosynthesis; pyridoxine 5'-phosphate from D-erythrose 4-phosphate: step 3/5. Functionally, catalyzes the reversible conversion of 3-phosphohydroxypyruvate to phosphoserine and of 3-hydroxy-2-oxo-4-phosphonooxybutanoate to phosphohydroxythreonine. The polypeptide is Phosphoserine aminotransferase (Enterobacter sp. (strain 638)).